Here is a 390-residue protein sequence, read N- to C-terminus: GTPase Obg (390 aa).

The Obg domain maps to 1-159; sequence MKFVDEATIL…RDLQLELMLL (159 aa). The interval 127 to 146 is disordered; that stretch reads NTRFKSSVNRTPRQKTMGTP. A compositionally biased stretch (polar residues) spans 129–143; the sequence is RFKSSVNRTPRQKTM. The 174-residue stretch at 160-333 folds into the OBG-type G domain; it reads ADVGMLGMPN…LCWDVMHFII (174 aa). GTP-binding positions include 166 to 173, 191 to 195, 213 to 216, 283 to 286, and 314 to 316; these read GMPNAGKS, FTTLV, DIPG, NKID, and SAA. Mg(2+)-binding residues include S173 and T193. Over residues 364–384 the composition is skewed to acidic residues; it reads MEAEAEEEWDDDWDEDDDEGV. Residues 364–390 form a disordered region; sequence MEAEAEEEWDDDWDEDDDEGVEIVYQR.

Belongs to the TRAFAC class OBG-HflX-like GTPase superfamily. OBG GTPase family. In terms of assembly, monomer. Mg(2+) serves as cofactor.

The protein resides in the cytoplasm. Its function is as follows. An essential GTPase which binds GTP, GDP and possibly (p)ppGpp with moderate affinity, with high nucleotide exchange rates and a fairly low GTP hydrolysis rate. Plays a role in control of the cell cycle, stress response, ribosome biogenesis and in those bacteria that undergo differentiation, in morphogenesis control. The protein is GTPase Obg of Cronobacter sakazakii (strain ATCC BAA-894) (Enterobacter sakazakii).